The primary structure comprises 716 residues: ATP-dependent zinc metalloprotease FTSH 1, chloroplastic (716 aa).

The transit peptide at 1-48 directs the protein to the chloroplast; that stretch reads MASNSLLRSSSNFFLGSHIIISSPTPKTTRKPSFPFSFVSRAKYQITR. Residues 49-86 constitute a thylakoid transit peptide; the sequence is SSQDENSPNGKPNSPFSSQVALAAILLSSISSSPLALA. A helical transmembrane segment spans residues 204–224; the sequence is FTVIGNLIFPLLAFGGLFLLF. 302–309 contacts ATP; it reads GPPGTGKT. Position 524 (histidine 524) interacts with Zn(2+). The active site involves glutamate 525. Residues histidine 528 and aspartate 605 each contribute to the Zn(2+) site.

It in the N-terminal section; belongs to the AAA ATPase family. In the C-terminal section; belongs to the peptidase M41 family. As to quaternary structure, interacts with CHIP and HSP70. Heterohexamers with FTSH2, FTSH5 and FTSH8. Zn(2+) is required as a cofactor. The FTSH1 precursor is ubiquitinated by CHIP in the cytoplasm. Ubiquitous.

The protein resides in the plastid. It is found in the chloroplast thylakoid membrane. Functionally, part of a complex that function as an ATP-dependent zinc metallopeptidase. Involved in the thylakoid formation and in the removal of damaged D1 in the photosystem II, preventing cell death under high-intensity light conditions. The sequence is that of ATP-dependent zinc metalloprotease FTSH 1, chloroplastic (FTSH1) from Arabidopsis thaliana (Mouse-ear cress).